Here is a 771-residue protein sequence, read N- to C-terminus: Ribonucleoside-diphosphate reductase large subunit (771 aa).

The ATP-cone domain maps to 1-92 (MFVIKRNGYK…ISNLHKETKK (92 aa)). ATP-binding positions include 5-6 (KR), 11-17 (ENVMFDK), Thr-53, Asp-57, and Lys-88. Ser-202 and Ser-217 together coordinate GDP. DTTP contacts are provided by residues 226–228 (DSI), Lys-243, and Arg-256. Asn-427 is a GDP binding site. Asn-427 (proton acceptor) is an active-site residue. Cys-429 functions as the Cysteine radical intermediate in the catalytic mechanism. Residues Glu-431 and 603–606 (TAST) each bind GDP. Catalysis depends on Glu-431, which acts as the Proton acceptor.

This sequence belongs to the ribonucleoside diphosphate reductase large chain family. In terms of assembly, interacts with RNR2/OPG047 subunit. Mg(2+) is required as a cofactor.

It catalyses the reaction a 2'-deoxyribonucleoside 5'-diphosphate + [thioredoxin]-disulfide + H2O = a ribonucleoside 5'-diphosphate + [thioredoxin]-dithiol. Functionally, ribonucleoside-diphosphate reductase holoenzyme provides the precursors necessary for viral DNA synthesis. Allows virus growth in non-dividing cells. Catalyzes the biosynthesis of deoxyribonucleotides from the corresponding ribonucleotides. The polypeptide is Ribonucleoside-diphosphate reductase large subunit (OPG080) (Monkeypox virus).